A 78-amino-acid polypeptide reads, in one-letter code: Large ribosomal subunit protein bL28 (78 aa).

Positions 1 to 25 are disordered; that stretch reads MSRVCQVTGKRPAVGNNRSHARNAT.

The protein belongs to the bacterial ribosomal protein bL28 family.

This is Large ribosomal subunit protein bL28 from Vibrio vulnificus (strain CMCP6).